The following is a 620-amino-acid chain: Chaperone protein DnaK (620 aa).

Thr-197 is modified (phosphothreonine; by autocatalysis). The interval 597–620 is disordered; sequence AMANKNNAEQPKKKDDDVIDAEVE.

The protein belongs to the heat shock protein 70 family.

Acts as a chaperone. The protein is Chaperone protein DnaK of Helicobacter acinonychis (strain Sheeba).